The primary structure comprises 627 residues: Chaperone protein HtpG (627 aa).

Residues methionine 1–arginine 343 form an a; substrate-binding region. The tract at residues glutamate 344–lysine 553 is b. The segment at valine 554 to serine 627 is c.

Belongs to the heat shock protein 90 family. As to quaternary structure, homodimer.

The protein localises to the cytoplasm. In terms of biological role, molecular chaperone. Has ATPase activity. The chain is Chaperone protein HtpG from Natranaerobius thermophilus (strain ATCC BAA-1301 / DSM 18059 / JW/NM-WN-LF).